The chain runs to 155 residues: Ribosome maturation factor RimP (155 aa).

Belongs to the RimP family.

The protein resides in the cytoplasm. Required for maturation of 30S ribosomal subunits. The sequence is that of Ribosome maturation factor RimP from Prochlorococcus marinus (strain AS9601).